Here is a 234-residue protein sequence, read N- to C-terminus: Exotoxin type G (234 aa).

An N-terminal signal peptide occupies residues 1-24 (MKTNILTIIILSCVFSYGSQLAYA).

Belongs to the staphylococcal/streptococcal toxin family.

Its function is as follows. Mitogenic for human peripheral blood lymphocytes. The sequence is that of Exotoxin type G (speG) from Streptococcus pyogenes serotype M1.